Consider the following 274-residue polypeptide: NH(3)-dependent NAD(+) synthetase (274 aa).

46–53 (GISGGQDS) provides a ligand contact to ATP. Asp52 provides a ligand contact to Mg(2+). A deamido-NAD(+)-binding site is contributed by Arg140. Position 160 (Thr160) interacts with ATP. Glu165 contacts Mg(2+). Deamido-NAD(+) is bound by residues Lys173 and Asp180. Positions 189 and 211 each coordinate ATP. Residue 260 to 261 (HK) coordinates deamido-NAD(+).

The protein belongs to the NAD synthetase family. In terms of assembly, homodimer.

It carries out the reaction deamido-NAD(+) + NH4(+) + ATP = AMP + diphosphate + NAD(+) + H(+). Its pathway is cofactor biosynthesis; NAD(+) biosynthesis; NAD(+) from deamido-NAD(+) (ammonia route): step 1/1. Its function is as follows. Catalyzes the ATP-dependent amidation of deamido-NAD to form NAD. Uses ammonia as a nitrogen source. This Streptococcus pyogenes serotype M18 (strain MGAS8232) protein is NH(3)-dependent NAD(+) synthetase.